Here is a 135-residue protein sequence, read N- to C-terminus: Large ribosomal subunit protein uL18c (135 aa).

Belongs to the universal ribosomal protein uL18 family. As to quaternary structure, part of the 50S ribosomal subunit; contacts the 5S rRNA.

It is found in the plastid. The protein resides in the chloroplast. Its function is as follows. Binds 5S rRNA, forms part of the central protuberance of the 50S subunit. This is Large ribosomal subunit protein uL18c (rpl18) from Phaeodactylum tricornutum (strain CCAP 1055/1).